Reading from the N-terminus, the 68-residue chain is Sperm-associated antigen 11A (68 aa).

The N-terminal stretch at 1–19 (MKVLLLFAVFFCLVQRNSG) is a signal peptide. Disulfide bonds link Cys-30–Cys-59, Cys-37–Cys-52, and Cys-42–Cys-60.

It belongs to the beta-defensin family. As to expression, only expressed in epididymis (middle part of the caput).

It localises to the secreted. Functionally, has antimicrobial activity against E.coli. Plays a role in the defense response in the male reproductive tract, contributing to sperm maturation, storage and protection. The sequence is that of Sperm-associated antigen 11A from Rattus norvegicus (Rat).